The chain runs to 258 residues: MAREPIIMNKLNLSIAVGNYVRIRPLVDGEVQIDGVDPIFMLQDPEEIFFRAFRHADYDICELSLSSYSVKTAAGTSPYIAVPVFPSRAFRHTSIYIRNDRGIESAADLKGKRIGVPEYQLTANVWVRLFLEEDHGLKASDVTWVRGGYEETGRLEKIVLKLPADVIVENAPETETLSGMLASGELDAVIGPRAPSCFTQGHPKVSYLYRDPQGAASDWYRALSYSRSCTCWGSGARWPSSTLGYPGPLPKHSRSPSP.

To P.testosteroni DHP decarboxylase.

The catalysed reaction is 4,5-dihydroxyphthalate + H(+) = 3,4-dihydroxybenzoate + CO2. It participates in xenobiotic degradation; phthalate degradation; 3,4-dihydroxybenzoate from phthalate: step 3/3. In Pseudomonas putida (Arthrobacter siderocapsulatus), this protein is 4,5-dihydroxyphthalate decarboxylase (pht5).